The primary structure comprises 101 residues: NAD(P)H-quinone oxidoreductase subunit 4L, chloroplastic (101 aa).

Helical transmembrane passes span 2–22 (MFEHVLFLSVYLFSIGIYGLI), 32–52 (ICLELILNSINLNLVTFSDLF), and 61–81 (IFAIFVIALAAAEAAIGLSIL).

Belongs to the complex I subunit 4L family. As to quaternary structure, NDH is composed of at least 16 different subunits, 5 of which are encoded in the nucleus.

It localises to the plastid. The protein localises to the chloroplast thylakoid membrane. The enzyme catalyses a plastoquinone + NADH + (n+1) H(+)(in) = a plastoquinol + NAD(+) + n H(+)(out). The catalysed reaction is a plastoquinone + NADPH + (n+1) H(+)(in) = a plastoquinol + NADP(+) + n H(+)(out). NDH shuttles electrons from NAD(P)H:plastoquinone, via FMN and iron-sulfur (Fe-S) centers, to quinones in the photosynthetic chain and possibly in a chloroplast respiratory chain. The immediate electron acceptor for the enzyme in this species is believed to be plastoquinone. Couples the redox reaction to proton translocation, and thus conserves the redox energy in a proton gradient. This is NAD(P)H-quinone oxidoreductase subunit 4L, chloroplastic from Agrostis stolonifera (Creeping bentgrass).